Here is a 101-residue protein sequence, read N- to C-terminus: NAD(P)H-quinone oxidoreductase subunit 4L, chloroplastic (101 aa).

The next 3 membrane-spanning stretches (helical) occupy residues 2–22 (MFER…YGLI), 32–52 (ICLE…SDLF), and 61–81 (IFAI…LSIL).

This sequence belongs to the complex I subunit 4L family. In terms of assembly, NDH is composed of at least 16 different subunits, 5 of which are encoded in the nucleus.

The protein localises to the plastid. The protein resides in the chloroplast thylakoid membrane. The enzyme catalyses a plastoquinone + NADH + (n+1) H(+)(in) = a plastoquinol + NAD(+) + n H(+)(out). It carries out the reaction a plastoquinone + NADPH + (n+1) H(+)(in) = a plastoquinol + NADP(+) + n H(+)(out). NDH shuttles electrons from NAD(P)H:plastoquinone, via FMN and iron-sulfur (Fe-S) centers, to quinones in the photosynthetic chain and possibly in a chloroplast respiratory chain. The immediate electron acceptor for the enzyme in this species is believed to be plastoquinone. Couples the redox reaction to proton translocation, and thus conserves the redox energy in a proton gradient. The chain is NAD(P)H-quinone oxidoreductase subunit 4L, chloroplastic from Zea mays (Maize).